The chain runs to 751 residues: Palmitoyltransferase ZDHHC8B (751 aa).

The Cytoplasmic portion of the chain corresponds to 1–13 (MPNSVGKRFKPTK). Residues 14-34 (YIPVSTAATLLVGSTTLFFVF) form a helical membrane-spanning segment. Over 35–41 (TCPWLTK) the chain is Extracellular. A helical transmembrane segment spans residues 42-62 (AVSPVVPLYNGIVFLFVLANF). The Cytoplasmic segment spans residues 63–148 (SMATFMDPGV…NCIGRRNYRY (86 aa)). One can recognise a DHHC domain in the interval 104–154 (KWCATCHFYRPPRCSHCSVCDNCVEEFDHHCPWVNNCIGRRNYRYFFLFLL). The S-palmitoyl cysteine intermediate role is filled by C134. The chain crosses the membrane as a helical span at residues 149–169 (FFLFLLSLSVHMVGVFSFGLL). Residues 170–185 (FVLHHLETLSALHTTV) are Extracellular-facing. A helical membrane pass occupies residues 186–206 (TLVVMCVTGLFFIPVMGLTGF). The Cytoplasmic segment spans residues 207–751 (HMVLVARGRT…VGGTTYEISV (545 aa)). 5 disordered regions span residues 293–346 (RSKS…PSTP), 437–461 (CTPL…SPGT), 633–659 (RSSA…GMNR), 666–685 (RSPV…SPSY), and 703–736 (HLGT…HTSV). Low complexity predominate over residues 326–338 (SQLTSSEESSLSS). Polar residues-rich tracts occupy residues 633–651 (RSSA…TSLH), 669–681 (VHQS…SVPR), and 724–733 (GTPSGTPSRH).

Belongs to the DHHC palmitoyltransferase family. ERF2/ZDHHC9 subfamily.

It localises to the golgi apparatus membrane. Its subcellular location is the mitochondrion membrane. It catalyses the reaction L-cysteinyl-[protein] + hexadecanoyl-CoA = S-hexadecanoyl-L-cysteinyl-[protein] + CoA. In terms of biological role, palmitoyltransferase that catalyzes the addition of palmitate onto various protein substrates and therefore function in several unrelated biological processes. The chain is Palmitoyltransferase ZDHHC8B from Danio rerio (Zebrafish).